The sequence spans 310 residues: Phosphoribosylaminoimidazole-succinocarboxamide synthase (310 aa).

Belongs to the SAICAR synthetase family.

It catalyses the reaction 5-amino-1-(5-phospho-D-ribosyl)imidazole-4-carboxylate + L-aspartate + ATP = (2S)-2-[5-amino-1-(5-phospho-beta-D-ribosyl)imidazole-4-carboxamido]succinate + ADP + phosphate + 2 H(+). It functions in the pathway purine metabolism; IMP biosynthesis via de novo pathway; 5-amino-1-(5-phospho-D-ribosyl)imidazole-4-carboxamide from 5-amino-1-(5-phospho-D-ribosyl)imidazole-4-carboxylate: step 1/2. The chain is Phosphoribosylaminoimidazole-succinocarboxamide synthase from Xanthomonas oryzae pv. oryzae (strain MAFF 311018).